The primary structure comprises 1176 residues: 3-hydroxy-3-methylglutaryl-coenzyme A reductase (1176 aa).

The Cytoplasmic portion of the chain corresponds to 1 to 34; sequence MSLPNHSGSSAFKSFSYIVGTGIKRAAKLSTRNP. The chain crosses the membrane as a helical span at residues 35–55; sequence IEMIVVVLILSSFSYFYLFNL. Residues 56–299 are Lumenal-facing; the sequence is ARTSDIFSGT…VKELIDLADN (244 aa). N-linked (GlcNAc...) asparagine glycans are attached at residues Asn224 and Asn238. Residues 300-320 traverse the membrane as a helical segment; sequence IDIIVILVGYIMMIATFISLY. An SSD domain is found at 301–465; sequence DIIVILVGYI…FTWYTAVLAL (165 aa). Topologically, residues 321–330 are cytoplasmic; it reads VNMRAMGSRY. The chain crosses the membrane as a helical span at residues 331 to 351; it reads TLATAVVFNGFFSFMLALLTV. Topologically, residues 352 to 355 are lumenal; the sequence is RALG. The helical transmembrane segment at 356–376 threads the bilayer; it reads VDVYPVVLAEAIPFLAVTIGF. Residues 377–422 are Cytoplasmic-facing; sequence ERPFKLTKRVFQFSKETPLTKQEIRTTIMRAVDTVALPIARDCFME. Residues 423–443 form a helical membrane-spanning segment; the sequence is IIVLVLGAKSGISGLEEFCLL. Residue Ser444 is a topological domain, lumenal. Residues 445–465 traverse the membrane as a helical segment; sequence AILLAYDFIIMFTWYTAVLAL. Residues 466-524 lie on the Cytoplasmic side of the membrane; that stretch reads KLELLRIREINGISADDIKKGTKKSTGYIRRTVIKAFSDDHAAGANTANQKADGPIIGR. A helical transmembrane segment spans residues 525–545; sequence VKLLMIVGFVVMHIFKFCSAF. Topologically, residues 546–622 are lumenal; it reads QSVGPQVNIT…DTYAVYIQHP (77 aa). Asn553 and Asn596 each carry an N-linked (GlcNAc...) asparagine glycan. Residues 623-643 traverse the membrane as a helical segment; sequence VISKWLTIALFVSLFLNTYLF. Residues 644–1176 are Cytoplasmic-facing; the sequence is NVAKQPKQIV…GTEPGTCIKS (533 aa). The tract at residues 699 to 724 is disordered; that stretch reads PNHKRSHNHHHSHSHSHNHHSNHHQS. The span at 700–721 shows a compositional bias: basic residues; sequence NHKRSHNHHHSHSHSHNHHSNH. Residue Glu841 is the Charge relay system of the active site. 847–853 is a CoA binding site; the sequence is STARGCK. NADP(+) contacts are provided by residues 907-909 and 934-942; these read SRF and DAMGMNMIS. The active-site Charge relay system is Lys972. A CoA-binding site is contributed by 1001 to 1003; that stretch reads VLK. Catalysis depends on Asp1048, which acts as the Charge relay system. Residue 1145–1146 coordinates CoA; the sequence is AH. The Proton donor role is filled by His1146. 1150–1151 is an NADP(+) binding site; the sequence is NR. A disordered region spans residues 1153 to 1176; it reads TQAPTITSGPAPSTGTEPGTCIKS.

It belongs to the HMG-CoA reductase family.

It is found in the endoplasmic reticulum membrane. It catalyses the reaction (R)-mevalonate + 2 NADP(+) + CoA = (3S)-3-hydroxy-3-methylglutaryl-CoA + 2 NADPH + 2 H(+). The protein operates within metabolic intermediate biosynthesis; (R)-mevalonate biosynthesis; (R)-mevalonate from acetyl-CoA: step 3/3. In terms of biological role, HMG-CoA reductase; part of the first module of ergosterol biosynthesis pathway that includes the early steps of the pathway, conserved across all eukaryotes, and which results in the formation of mevalonate from acetyl-coenzyme A (acetyl-CoA). In this module, the cytosolic acetyl-CoA acetyltransferase catalyzes the formation of acetoacetyl-CoA. The hydroxymethylglutaryl-CoA synthase then condenses acetyl-CoA with acetoacetyl-CoA to form HMG-CoA. The rate-limiting step of the early module is the reduction to mevalonate by the 3-hydroxy-3-methylglutaryl-coenzyme A (HMG-CoA) reductase hmgA. This is 3-hydroxy-3-methylglutaryl-coenzyme A reductase from Phycomyces blakesleeanus (strain ATCC 8743b / DSM 1359 / FGSC 10004 / NBRC 33097 / NRRL 1555).